The following is a 414-amino-acid chain: Histidine--tRNA ligase (414 aa).

The protein belongs to the class-II aminoacyl-tRNA synthetase family. As to quaternary structure, homodimer.

The protein resides in the cytoplasm. The catalysed reaction is tRNA(His) + L-histidine + ATP = L-histidyl-tRNA(His) + AMP + diphosphate + H(+). This Rickettsia africae (strain ESF-5) protein is Histidine--tRNA ligase.